The sequence spans 235 residues: Uridylate kinase (235 aa).

9-12 (KLSG) lines the ATP pocket. The segment at 17–22 (GKDGYG) is involved in allosteric activation by GTP. Gly-51 is a UMP binding site. ATP contacts are provided by Gly-52 and Arg-56. UMP-binding positions include Asp-71 and 132 to 139 (TGNPYFTT). 3 residues coordinate ATP: Thr-159, Tyr-165, and Asp-168.

This sequence belongs to the UMP kinase family. Homohexamer.

The protein resides in the cytoplasm. The enzyme catalyses UMP + ATP = UDP + ADP. The protein operates within pyrimidine metabolism; CTP biosynthesis via de novo pathway; UDP from UMP (UMPK route): step 1/1. With respect to regulation, allosterically activated by GTP. Inhibited by UTP. Catalyzes the reversible phosphorylation of UMP to UDP. This is Uridylate kinase from Chlorobium luteolum (strain DSM 273 / BCRC 81028 / 2530) (Pelodictyon luteolum).